Here is a 338-residue protein sequence, read N- to C-terminus: MSTLRLLISDSYDPWFNLAVEECIFRQMPATQRVLFLWRNADTVVIGRAQNPWKECNTRRMEEDNVRLARRSSGGGAVFHDLGNTCFTFMAGKPEYDKTISTSIVLNALNALGVSAEASGRNDLVVKTAEGDRKVSGSAYRETKDRGFHHGTLLLNADLSRLANYLNPDKKKLAAKGITSVRSRVTNLTELLPGIPHEQVCEAITEAFFAHYGERVEAEIISPDKTPDLPNFAETFARQSSWEWNFGQAPAFSHLLDERFSWGGVELHFDVEKGHITRAQVFTDSLNPAPLEALAGRLQGCLYRADMLQQECEALLVDFPDQEKELRELSTWIAGAVR.

Positions 29–216 constitute a BPL/LPL catalytic domain; that stretch reads PATQRVLFLW…AFFAHYGERV (188 aa). Residues Arg71, 76-79, and Lys134 contribute to the ATP site; that span reads GAVF. Lys134 provides a ligand contact to (R)-lipoate.

The protein belongs to the LplA family. Monomer.

Its subcellular location is the cytoplasm. The catalysed reaction is L-lysyl-[lipoyl-carrier protein] + (R)-lipoate + ATP = N(6)-[(R)-lipoyl]-L-lysyl-[lipoyl-carrier protein] + AMP + diphosphate + H(+). It functions in the pathway protein modification; protein lipoylation via exogenous pathway; protein N(6)-(lipoyl)lysine from lipoate: step 1/2. Its pathway is protein modification; protein lipoylation via exogenous pathway; protein N(6)-(lipoyl)lysine from lipoate: step 2/2. Its function is as follows. Catalyzes both the ATP-dependent activation of exogenously supplied lipoate to lipoyl-AMP and the transfer of the activated lipoyl onto the lipoyl domains of lipoate-dependent enzymes. The polypeptide is Lipoate-protein ligase A (Escherichia coli O157:H7).